The sequence spans 96 residues: uncharacterized protein (96 aa).

Belongs to the NifU family.

This is an uncharacterized protein from Azotobacter vinelandii.